The sequence spans 382 residues: Type 2 DNA topoisomerase 6 subunit A (382 aa).

Positions 14 to 155 (YDPQKVLKKL…MHITADRRGY (142 aa)) constitute a Topo IIA-type catalytic domain. The O-(5'-phospho-DNA)-tyrosine intermediate role is filled by Tyr-108. The Mg(2+) site is built by Glu-202 and Asp-254.

Belongs to the TOP6A family. As to quaternary structure, homodimer. Heterotetramer of two Top6A and two Top6B chains. Requires Mg(2+) as cofactor.

It catalyses the reaction ATP-dependent breakage, passage and rejoining of double-stranded DNA.. Functionally, relaxes both positive and negative superturns and exhibits a strong decatenase activity. This chain is Type 2 DNA topoisomerase 6 subunit A, found in Pyrococcus horikoshii (strain ATCC 700860 / DSM 12428 / JCM 9974 / NBRC 100139 / OT-3).